A 153-amino-acid polypeptide reads, in one-letter code: Superoxide dismutase [Cu-Zn] (153 aa).

Cu cation contacts are provided by H45, H47, and H62. C56 and C145 are disulfide-bonded. H62, H70, H79, and D82 together coordinate Zn(2+). H119 is a binding site for Cu cation.

This sequence belongs to the Cu-Zn superoxide dismutase family. As to quaternary structure, homodimer. Cu cation is required as a cofactor. It depends on Zn(2+) as a cofactor.

It is found in the cytoplasm. It carries out the reaction 2 superoxide + 2 H(+) = H2O2 + O2. Functionally, destroys radicals which are normally produced within the cells and which are toxic to biological systems. The chain is Superoxide dismutase [Cu-Zn] from Drosophila virilis (Fruit fly).